The following is a 930-amino-acid chain: Polypeptide N-acetylgalactosaminyltransferase 5 (930 aa).

At 1 to 12 the chain is on the cytoplasmic side; sequence MNKIRKFFRGSG. The chain crosses the membrane as a helical; Signal-anchor for type II membrane protein span at residues 13–35; sequence RVLAFIFAASVIWLLFDMAALRL. Over 36–930 the chain is Lumenal; sequence SFSEINAGLL…KWKFEKYYEV (895 aa). Residues 190 to 209 form a disordered region; sequence KQEAPQNYNVSSDTSKQASE. Residues 193–209 show a composition bias toward polar residues; the sequence is APQNYNVSSDTSKQASE. N-linked (GlcNAc...) asparagine glycosylation is found at asparagine 198, asparagine 213, and asparagine 283. Serine 285 bears the Phosphoserine mark. N-linked (GlcNAc...) asparagine glycosylation is found at asparagine 287, asparagine 309, asparagine 355, and asparagine 387. The tract at residues 327–381 is disordered; the sequence is DTKEVPNSKTQTVFPKLLGGSPHKQIPRNQSKTSSSPPALKKAVSQSKPTISGGL. Polar residues predominate over residues 353–363; that stretch reads PRNQSKTSSSP. 3 cysteine pairs are disulfide-bonded: cysteine 476-cysteine 708, cysteine 699-cysteine 779, and cysteine 812-cysteine 825. Positions 485-594 are catalytic subdomain A; the sequence is LPTTSIIMCF…VGWLEPLLER (110 aa). 2 residues coordinate substrate: aspartate 526 and arginine 555. N-linked (GlcNAc...) asparagine glycosylation is present at asparagine 568. Aspartate 578 provides a ligand contact to Mn(2+). Serine 579 lines the substrate pocket. Residue histidine 580 coordinates Mn(2+). The interval 654–716 is catalytic subdomain B; that stretch reads IIRCPVMAGG…PCSRVGHIFR (63 aa). Tryptophan 685 is a substrate binding site. Position 713 (histidine 713) interacts with Mn(2+). 2 residues coordinate substrate: arginine 716 and tyrosine 721. 3 N-linked (GlcNAc...) asparagine glycosylation sites follow: asparagine 766, asparagine 817, and asparagine 835. Residues 794–925 form the Ricin B-type lectin domain; sequence KAPVVRASGV…MELQQKWKFE (132 aa). 2 disulfides stabilise this stretch: cysteine 848–cysteine 863 and cysteine 898–cysteine 913. Residue asparagine 902 is glycosylated (N-linked (GlcNAc...) asparagine).

This sequence belongs to the glycosyltransferase 2 family. GalNAc-T subfamily. As to quaternary structure, interacts with EXT2. Does not interact with EXT1, EXTL1 or EXTL3. It depends on Mn(2+) as a cofactor. As to expression, expressed at low level. Not expressed before E7.5 during embryogenesis. Expressed in dental mesenchyme and tongue. Accumulates in a subset of mesenchymal cells at the ventral-most portions of the 12.5 dpc maxilla and mandible underlying the dental lamina.

The protein resides in the golgi apparatus membrane. The catalysed reaction is L-seryl-[protein] + UDP-N-acetyl-alpha-D-galactosamine = a 3-O-[N-acetyl-alpha-D-galactosaminyl]-L-seryl-[protein] + UDP + H(+). The enzyme catalyses L-threonyl-[protein] + UDP-N-acetyl-alpha-D-galactosamine = a 3-O-[N-acetyl-alpha-D-galactosaminyl]-L-threonyl-[protein] + UDP + H(+). The protein operates within protein modification; protein glycosylation. Its function is as follows. Catalyzes the initial reaction in O-linked oligosaccharide biosynthesis, the transfer of an N-acetyl-D-galactosamine residue to a serine or threonine residue on the protein receptor. Has activity toward EA2 peptide substrate, but has a weak activity toward Muc2 or Muc1b substrates. In Mus musculus (Mouse), this protein is Polypeptide N-acetylgalactosaminyltransferase 5 (Galnt5).